Here is a 79-residue protein sequence, read N- to C-terminus: MASLMEVRDMLALQGRMEAKQLSARLQTPQPLIDAMLERMEAMGKVVRISETSEGCLSGSCKSCPEGKAACRQEWWALR.

Iron-sulfur cluster is bound by residues Cys-56, Cys-61, Cys-64, and Cys-71.

Belongs to the FeoC family.

In terms of biological role, may function as a transcriptional regulator that controls feoABC expression. This Klebsiella pneumoniae subsp. pneumoniae (strain ATCC 700721 / MGH 78578) protein is Probable [Fe-S]-dependent transcriptional repressor.